The following is a 199-amino-acid chain: Zinc finger matrin-type protein 2 (199 aa).

Position 2 is an N-acetylalanine (Ala2). Glycyl lysine isopeptide (Lys-Gly) (interchain with G-Cter in SUMO2) cross-links involve residues Lys8, Lys36, Lys39, Lys45, Lys55, Lys61, Lys64, Lys70, Lys102, and Lys123. The interval 27–46 (KRLTEEREKKDGKPVQPVKR) is disordered. A Matrin-type zinc finger spans residues 80 to 104 (YYCNVCDCVVKDSINFLDHINGKKH). Residues 150-173 (REEEEKAKAYKKEKQKEKKRRAEE) show a composition bias toward basic and acidic residues. Positions 150-175 (REEEEKAKAYKKEKQKEKKRRAEEDL) are disordered.

As to quaternary structure, component of the spliceosome B complex.

The protein localises to the nucleus. Involved in pre-mRNA splicing as a component of the spliceosome. In Homo sapiens (Human), this protein is Zinc finger matrin-type protein 2 (ZMAT2).